The chain runs to 144 residues: MFFGTFNHAIDAKGRTSLPAKFREALAAAGEPRIVLMQYPHWRAVQALPQSVWNELVKKVMEASPLDARWQRNVLKFVSSAHEVDLDVHGRVLVPPPLREWAGLQKDVVWVGMGRTIHLYDRAAYDEQMSAEIPADQVVDFFRT.

2 consecutive SpoVT-AbrB domains span residues 5 to 50 and 81 to 124; these read TFNH…ALPQ and AHEV…DRAA.

The protein belongs to the MraZ family. Forms oligomers.

It is found in the cytoplasm. It localises to the nucleoid. This Anaeromyxobacter dehalogenans (strain 2CP-C) protein is Transcriptional regulator MraZ.